We begin with the raw amino-acid sequence, 130 residues long: Holo-[acyl-carrier-protein] synthase (130 aa).

Residues Asp8 and Glu62 each contribute to the Mg(2+) site.

Belongs to the P-Pant transferase superfamily. AcpS family. Mg(2+) serves as cofactor.

It localises to the cytoplasm. It carries out the reaction apo-[ACP] + CoA = holo-[ACP] + adenosine 3',5'-bisphosphate + H(+). Functionally, transfers the 4'-phosphopantetheine moiety from coenzyme A to a Ser of acyl-carrier-protein. The chain is Holo-[acyl-carrier-protein] synthase from Herminiimonas arsenicoxydans.